The primary structure comprises 78 residues: Omega-conotoxin-like 12 (78 aa).

The N-terminal stretch at 1–22 is a signal peptide; the sequence is MKLTCVVIVAVLLLTACQLITA. A propeptide spanning residues 23–42 is cleaved from the precursor; sequence DDSRGTQKHRSLRSTTKVSK. Intrachain disulfides connect Cys-46-Cys-62, Cys-53-Cys-65, and Cys-61-Cys-72.

Belongs to the conotoxin O1 superfamily. In terms of tissue distribution, expressed by the venom duct.

The protein resides in the secreted. Its function is as follows. Omega-conotoxins act at presynaptic membranes, they bind and block voltage-gated calcium channels (Cav). The sequence is that of Omega-conotoxin-like 12 from Conus striatus (Striated cone).